The following is a 253-amino-acid chain: Imidazole glycerol phosphate synthase subunit HisF (253 aa).

Active-site residues include aspartate 11 and aspartate 130.

Belongs to the HisA/HisF family. In terms of assembly, heterodimer of HisH and HisF.

The protein localises to the cytoplasm. The catalysed reaction is 5-[(5-phospho-1-deoxy-D-ribulos-1-ylimino)methylamino]-1-(5-phospho-beta-D-ribosyl)imidazole-4-carboxamide + L-glutamine = D-erythro-1-(imidazol-4-yl)glycerol 3-phosphate + 5-amino-1-(5-phospho-beta-D-ribosyl)imidazole-4-carboxamide + L-glutamate + H(+). The protein operates within amino-acid biosynthesis; L-histidine biosynthesis; L-histidine from 5-phospho-alpha-D-ribose 1-diphosphate: step 5/9. IGPS catalyzes the conversion of PRFAR and glutamine to IGP, AICAR and glutamate. The HisF subunit catalyzes the cyclization activity that produces IGP and AICAR from PRFAR using the ammonia provided by the HisH subunit. This chain is Imidazole glycerol phosphate synthase subunit HisF, found in Opitutus terrae (strain DSM 11246 / JCM 15787 / PB90-1).